Reading from the N-terminus, the 72-residue chain is Gas vesicle protein A (72 aa).

Belongs to the gas vesicle GvpA family. As to quaternary structure, the gas vesicle shell is 2 nm thick and consists of a single layer of this protein. It forms helical ribs nearly perpendicular to the long axis of the vesicle.

Its subcellular location is the gas vesicle shell. In terms of biological role, gas vesicles are hollow, gas filled proteinaceous nanostructures found in some microorganisms. During planktonic growth they allow positioning of the organism at a favorable depth for light or nutrient acquisition. GvpA forms the protein shell. This chain is Gas vesicle protein A, found in Geotalea uraniireducens (strain Rf4) (Geobacter uraniireducens).